A 225-amino-acid polypeptide reads, in one-letter code: Membrane protein (225 aa).

Over 1-20 (MSNETNCTLDFEQSVELFKE) the chain is Virion surface. A helical transmembrane segment spans residues 21-41 (YNLFITAFLLFLTIILQYGYA). The Intravirion portion of the chain corresponds to 42 to 51 (TRIRFIYILK). Residues 52 to 72 (MIVLWCFWPLNIAVGVISCIY) traverse the membrane as a helical segment. Topologically, residues 73–77 (PPNTG) are virion surface. Residues 78–98 (GLVAAIILTVFACLSFVGYWI) form a helical membrane-spanning segment. The Intravirion portion of the chain corresponds to 99-225 (QSCRLFKRCR…VATGGSSLYT (127 aa)).

The protein belongs to the gammacoronaviruses M protein family. In terms of assembly, homomultimer. Interacts with envelope E protein in the budding compartment of the host cell, which is located between endoplasmic reticulum and the Golgi complex. Forms a complex with HE and S proteins. Interacts with nucleocapsid N protein. This interaction probably participates in RNA packaging into the virus.

The protein resides in the virion membrane. The protein localises to the host Golgi apparatus membrane. Its function is as follows. Component of the viral envelope that plays a central role in virus morphogenesis and assembly via its interactions with other viral proteins. The sequence is that of Membrane protein from Avian infectious bronchitis virus (strain KB8523) (IBV).